Here is a 375-residue protein sequence, read N- to C-terminus: METKYNFVKQQIKSKILEGIVLPHGKIGSENELMKEYNVSRHTVRKAIDELVNEGWVYRKQGAGTFCADRTDQKNPIGKAQRKNIALITTYLSEYIFPSIIRGAESILSEHGYQVTIFSTNNNHEQEKRALEAVLSQRFDGLIVEPTKSSIPNPNINYYLNLERQGIPYVMINAYYEELEPYFLGMDDVKGGYTQTKHLLDLGHEQIVGLFKNDDLQGAKRLKGFIKAHRERGIALNPQHIITYTTEQKNAKPLEELHRIFKDRSHRPTGIVCYNDELALKLLDVIREFDIRVPEELSVVGYDDSFLSVASEVKLTTIQHPKVEMGIDAAKLIISCIEQERKDRSADGEQSIIYEPKLVVRHSTAEAKSEKGVAK.

The 70-residue stretch at 1-70 folds into the HTH gntR-type domain; it reads METKYNFVKQ…QGAGTFCADR (70 aa). A DNA-binding region (H-T-H motif) is located at residues 30 to 49; the sequence is ENELMKEYNVSRHTVRKAID.

The protein resides in the cytoplasm. In terms of biological role, transcriptional repressor of the arabinose utilization genes. This chain is Arabinose metabolism transcriptional repressor (araR), found in Halalkalibacterium halodurans (strain ATCC BAA-125 / DSM 18197 / FERM 7344 / JCM 9153 / C-125) (Bacillus halodurans).